Reading from the N-terminus, the 206-residue chain is Large ribosomal subunit protein uL4 (206 aa).

This sequence belongs to the universal ribosomal protein uL4 family. Part of the 50S ribosomal subunit.

One of the primary rRNA binding proteins, this protein initially binds near the 5'-end of the 23S rRNA. It is important during the early stages of 50S assembly. It makes multiple contacts with different domains of the 23S rRNA in the assembled 50S subunit and ribosome. Its function is as follows. Forms part of the polypeptide exit tunnel. This is Large ribosomal subunit protein uL4 from Rhodopseudomonas palustris (strain ATCC BAA-98 / CGA009).